The following is a 551-amino-acid chain: Hydroxylamine reductase (551 aa).

The [2Fe-2S] cluster site is built by C3, C6, C18, and C25. Positions 249, 273, 317, 405, 433, 459, 493, and 495 each coordinate hybrid [4Fe-2O-2S] cluster. C405 bears the Cysteine persulfide mark.

Belongs to the HCP family. Requires [2Fe-2S] cluster as cofactor. Hybrid [4Fe-2O-2S] cluster is required as a cofactor.

It localises to the cytoplasm. The enzyme catalyses A + NH4(+) + H2O = hydroxylamine + AH2 + H(+). In terms of biological role, catalyzes the reduction of hydroxylamine to form NH(3) and H(2)O. In Actinobacillus pleuropneumoniae serotype 7 (strain AP76), this protein is Hydroxylamine reductase.